The sequence spans 181 residues: Crossover junction endodeoxyribonuclease RuvC (181 aa).

Catalysis depends on residues Asp-7, Glu-67, and Asp-139. Asp-7, Glu-67, and Asp-139 together coordinate Mg(2+).

Belongs to the RuvC family. As to quaternary structure, homodimer which binds Holliday junction (HJ) DNA. The HJ becomes 2-fold symmetrical on binding to RuvC with unstacked arms; it has a different conformation from HJ DNA in complex with RuvA. In the full resolvosome a probable DNA-RuvA(4)-RuvB(12)-RuvC(2) complex forms which resolves the HJ. Mg(2+) serves as cofactor.

The protein resides in the cytoplasm. The catalysed reaction is Endonucleolytic cleavage at a junction such as a reciprocal single-stranded crossover between two homologous DNA duplexes (Holliday junction).. In terms of biological role, the RuvA-RuvB-RuvC complex processes Holliday junction (HJ) DNA during genetic recombination and DNA repair. Endonuclease that resolves HJ intermediates. Cleaves cruciform DNA by making single-stranded nicks across the HJ at symmetrical positions within the homologous arms, yielding a 5'-phosphate and a 3'-hydroxyl group; requires a central core of homology in the junction. The consensus cleavage sequence is 5'-(A/T)TT(C/G)-3'. Cleavage occurs on the 3'-side of the TT dinucleotide at the point of strand exchange. HJ branch migration catalyzed by RuvA-RuvB allows RuvC to scan DNA until it finds its consensus sequence, where it cleaves and resolves the cruciform DNA. This chain is Crossover junction endodeoxyribonuclease RuvC, found in Ralstonia pickettii (strain 12J).